The following is a 103-amino-acid chain: Putative double-stranded DNA mimic protein APJL_1366 (103 aa).

The protein belongs to the putative dsDNA mimic protein family.

Functionally, may act as a double-stranded DNA (dsDNA) mimic. Probably regulates the activity of a dsDNA-binding protein. The protein is Putative double-stranded DNA mimic protein APJL_1366 of Actinobacillus pleuropneumoniae serotype 3 (strain JL03).